The following is a 363-amino-acid chain: Holliday junction branch migration complex subunit RuvB (363 aa).

A disordered region spans residues 1–32 (MSDVERTEFEIPGGIPPRRNGGQGRAADTNVD). The large ATPase domain (RuvB-L) stretch occupies residues 27–207 (ADTNVDANLK…FGFTAQMEFY (181 aa)). Residues leucine 46, arginine 47, glycine 88, lysine 91, threonine 92, threonine 93, 154-156 (EDF), arginine 197, tyrosine 207, and arginine 244 contribute to the ATP site. Residue threonine 92 participates in Mg(2+) binding. Residues 208 to 278 (DVPDLTKVVK…AANAALIVFD (71 aa)) form a small ATPAse domain (RuvB-S) region. The head domain (RuvB-H) stretch occupies residues 281 to 363 (EVGLDRLDRA…EPPEGTIGDY (83 aa)). DNA is bound by residues arginine 336 and arginine 341.

This sequence belongs to the RuvB family. Homohexamer. Forms an RuvA(8)-RuvB(12)-Holliday junction (HJ) complex. HJ DNA is sandwiched between 2 RuvA tetramers; dsDNA enters through RuvA and exits via RuvB. An RuvB hexamer assembles on each DNA strand where it exits the tetramer. Each RuvB hexamer is contacted by two RuvA subunits (via domain III) on 2 adjacent RuvB subunits; this complex drives branch migration. In the full resolvosome a probable DNA-RuvA(4)-RuvB(12)-RuvC(2) complex forms which resolves the HJ.

Its subcellular location is the cytoplasm. It carries out the reaction ATP + H2O = ADP + phosphate + H(+). The RuvA-RuvB-RuvC complex processes Holliday junction (HJ) DNA during genetic recombination and DNA repair, while the RuvA-RuvB complex plays an important role in the rescue of blocked DNA replication forks via replication fork reversal (RFR). RuvA specifically binds to HJ cruciform DNA, conferring on it an open structure. The RuvB hexamer acts as an ATP-dependent pump, pulling dsDNA into and through the RuvAB complex. RuvB forms 2 homohexamers on either side of HJ DNA bound by 1 or 2 RuvA tetramers; 4 subunits per hexamer contact DNA at a time. Coordinated motions by a converter formed by DNA-disengaged RuvB subunits stimulates ATP hydrolysis and nucleotide exchange. Immobilization of the converter enables RuvB to convert the ATP-contained energy into a lever motion, pulling 2 nucleotides of DNA out of the RuvA tetramer per ATP hydrolyzed, thus driving DNA branch migration. The RuvB motors rotate together with the DNA substrate, which together with the progressing nucleotide cycle form the mechanistic basis for DNA recombination by continuous HJ branch migration. Branch migration allows RuvC to scan DNA until it finds its consensus sequence, where it cleaves and resolves cruciform DNA. This chain is Holliday junction branch migration complex subunit RuvB, found in Corynebacterium glutamicum (strain R).